The primary structure comprises 248 residues: Ferric nitrobindin-like protein (248 aa).

2 stretches are compositionally biased toward polar residues: residues 1 to 25 (MSSDKANNQSPDQGANTPAESTNSG) and 32 to 43 (QAVNLAAEQSKS). The segment at 1–49 (MSSDKANNQSPDQGANTPAESTNSGPKLDGNQAVNLAAEQSKSTADKNL) is disordered. A GXWXGXG motif is present at residues 82–88 (GVWRGQG). The segment at 118 to 147 (SRTWKINPPAEEGAEADGDEASAESAGEPE) is disordered. The segment covering 129–139 (EGAEADGDEAS) has biased composition (acidic residues).

This sequence belongs to the nitrobindin family.

This Corynebacterium urealyticum (strain ATCC 43042 / DSM 7109) protein is Ferric nitrobindin-like protein.